The chain runs to 583 residues: L-arabonate dehydratase (583 aa).

The [4Fe-4S] cluster site is built by Cys-56, Cys-124, and Cys-197.

The protein belongs to the IlvD/Edd family. As to quaternary structure, homodimer. The cofactor is [4Fe-4S] cluster.

It catalyses the reaction L-arabinonate = 2-dehydro-3-deoxy-L-arabinonate + H2O. Its activity is regulated as follows. Activity is enhanced by Mg(2+), being optimal with a concentration of 1-10 mM Mg(2+). In terms of biological role, catalyzes the dehydration of L-arabonate to L-2-keto-3-deoxyarabonate (L-KDA). Is involved in a degradation pathway of L-arabinose that allows A.brasilense to grow on L-arabinose as a sole carbon source. To a lesser extent, can also use D-xylonate as substrate, but not D-galactonate, D-arabonate, and D-gluconate. This chain is L-arabonate dehydratase (araC), found in Azospirillum brasilense.